The chain runs to 378 residues: MAQCNLFYQYPITPILEGHVRNILICTEKDVEKLQSQSSLRLREKIDQGHRDKLLRMRLKTELDALQKKMQKDSDVLNSHLKAIEDALLFTNDGEVNVETKADAQLIPKSPEKLEKFNQVAITPLDPFIRFTDDFRGEMINTFFNNAQMWNFTFGSWFYKLKRVFYNEPGLRRALKLTNVDSLTISKELLAVTVNALEQATVYPIFGSEMSDLEAALCILAAFYSTYENSQIDERTTLVDVITLLPVIFRLLGSEITALKNVSPSGTYFGFNDPSCMKFFVPMRKGKHYAENTFGNHVLIKMLLGRGVMQKIPGEKISQNFDVEARLHGAIKNDVLVYWTYQLMRPKLGNNVPIFIHDQHYLRSGLVAIESLFLLWRI.

The protein belongs to the herpesviridae UL25 family. In terms of assembly, heterodimerizes with packaging protein U64. Interacts with major capsid protein U57 and triplex capsid protein U29, essentially at the pentamer vertices. May interact with large tegument protein U31.

The protein resides in the virion. Its subcellular location is the host nucleus. In terms of biological role, plays a role at the late stage in the encapsidation of viral DNA, assuring correct genome cleavage and presumably stabilizing capsids that contain full-lengtht viral genomes. Located on the external vertices of the T=16 icosahedric capsid, may bind together the tegument and the capsid through interaction with large tegument protein U31. The sequence is that of Virion-packaging protein UL25 homolog (U50) from Human herpesvirus 6A (strain GS) (HHV-6 variant A).